Consider the following 337-residue polypeptide: Inositol 2-dehydrogenase 1 (337 aa).

Belongs to the Gfo/Idh/MocA family. Homotetramer.

The catalysed reaction is myo-inositol + NAD(+) = scyllo-inosose + NADH + H(+). Functionally, involved in the oxidation of myo-inositol (MI) to 2-keto-myo-inositol (2KMI or 2-inosose). This is Inositol 2-dehydrogenase 1 from Saccharopolyspora erythraea (strain ATCC 11635 / DSM 40517 / JCM 4748 / NBRC 13426 / NCIMB 8594 / NRRL 2338).